A 1188-amino-acid chain; its full sequence is MALVPSPRAGGFLPAETHSGPQPPRRRVRQSTAGAAPTATRAPRRRAATASPGEPPSTTASGRPPAANNVSLTPNSRLRGTIVAPRGQGLLYAIDTATNSPMEIKFHRRLASALTRLLQVNLRSVPADLNEAFLDSLDSSQIRTLALKLKVPRVEVWTCGSRGVVVPSIIHPQQERAGAEEGDEGERQDTEDFLNFPLRFLVRGRQVHLIQEMQSVQRCEYCARFYKYQHECTVRRRDFYFHHINAHSSGWWQKINFFPIGSHPRVERLFVTYDVETYTWMGAFGKQLVPFMLVMHLSGEEALVKEACRLACELQWDTWGNDERTFYVVTPEKLAVGKKFREYRNRLQAHFALQLWRGFLAANPQLAEWACLEMGLFSPDYLTYEELQKAPKLQGRPRFLELYIVGHNINGFDEIVLAAQVINNRSDVPGPFKITRNFMPRAGKILFNDITFALPNPSSKKRTDYRLWEQGACDDSDFKYQFLKVMVRDTFALTHTSLRKAAQAYTLPVEKGCCPYKAVNEFYMLGSYRADERGFPAEDYWKDREEYLLNRELWEKKQCPHYDLVRETLDYCALDVLVTAALVQKLRESYAQFIRDAVGLPEASFNVFQRPTISSNSHAIFRQILYRTVKPQRSDLGGSLLAPSHEMYDYVRASIRGGRCYPTYIGVLREPLYVYDICGMYASALTHPMPWGFPLNPYERALAVRDWEHALLQVGTPIDYFNRTLLPGIFTIDADPPPENLLDVLPPLCSRKGGRLCWTNEPLRGEVVTSVDLITLHNRGWHVRLLPDERATVFPEWRCVAKEYVHLNITAKERADREKNQTLRSIAKLLSNALYGSFATKLDNKKIVFSDQMDSATIKSIAAGQINIKSTSFVETDTLSAEVMPTFQRAYSPEQLAVVHSDAEESDEEPGHAPFYTPTHKPNDHVTYTYKPITFMDAEEDDLCLHTLEKVDPLVENNRYPSQIASFVLAWTRAFVSEWSEILYAEDRGTPLEQRTLKSVYGDTDSLFVTEAGYRLMETRGKKRIKKHGGNLVFDPKHPELAWLVECETVCAQCGADAYSPESVFLAPKLYALKCLRCPSCQQISKGKLRAKGHAAETLNYDLMLKCYLADFQGEDARFHTSRMSLKRTLASAQPGARPFTVTETNLTRTLRPWKDITLAPLDAHRLVPYSQSRPNPRNQEVCWIEMP.

The disordered stretch occupies residues 1–74; sequence MALVPSPRAG…PAANNVSLTP (74 aa). A compositionally biased stretch (low complexity) spans 31–41; the sequence is STAGAAPTATR.

The protein belongs to the DNA polymerase type-B family. In terms of assembly, heterodimer with the terminal protein; this heterodimer binds to bp 9 to 18 of the genome. Forms a complex with viral pTP, DBP and hosts NFIA and POU2F1/OCT1 for initiation of replication.

Its subcellular location is the host nucleus. The enzyme catalyses DNA(n) + a 2'-deoxyribonucleoside 5'-triphosphate = DNA(n+1) + diphosphate. Eukaryotic-type DNA polymerase involved in viral genomic replication. DNA synthesis is protein primed, and acts in a strand displacement replication. Assembles in complex with viral pTP, DBP, host NFIA and host POU2F1/OCT1 on viral origin of replication. The polymerase covalently transfers dCMP onto pTP, thereby initiating complementary strand synthesis. The chain is DNA polymerase from Human adenovirus F serotype 40 (HAdV-40).